The chain runs to 589 residues: ATP-dependent lipid A-core flippase (589 aa).

Helical transmembrane passes span 29–49 (LLLVAALIAALIEAAGTTGFL), 70–90 (WLPVQIILLFVVRGIAGYITD), 157–177 (VIGALALMLWHSWQVTLTILV), 261–281 (MIGAIGLSALLFVAGAQALAG), and 283–303 (LTAGDFVVLMTSMLTIIPGLK). Positions 32-314 (VAALIAALIE…LTNVQNMVQR (283 aa)) constitute an ABC transmembrane type-1 domain. Residues 346–582 (IEFRDVTARY…GGLYSHLHGM (237 aa)) form the ABC transporter domain. 380–387 (GRSGSGKS) serves as a coordination point for ATP.

It belongs to the ABC transporter superfamily. Lipid exporter (TC 3.A.1.106) family. In terms of assembly, homodimer.

It is found in the cell inner membrane. The catalysed reaction is ATP + H2O + lipid A-core oligosaccharideSide 1 = ADP + phosphate + lipid A-core oligosaccharideSide 2.. Involved in lipopolysaccharide (LPS) biosynthesis. Translocates lipid A-core from the inner to the outer leaflet of the inner membrane. Transmembrane domains (TMD) form a pore in the inner membrane and the ATP-binding domain (NBD) is responsible for energy generation. The sequence is that of ATP-dependent lipid A-core flippase from Xanthomonas oryzae pv. oryzae (strain MAFF 311018).